The following is a 551-amino-acid chain: uncharacterized protein (551 aa).

Residues 1–11 (MRRVSLPNQLN) show a composition bias toward polar residues. Disordered stretches follow at residues 1 to 22 (MRRV…TRGE) and 523 to 551 (CDPT…QAFH). The span at 12–22 (ETRRRSPTRGE) shows a compositional bias: basic and acidic residues. Residues 537–551 (QQPQQQQQQQQQAFH) show a composition bias toward low complexity.

The protein to Synechocystis PCC 6803 sll0335 and to M.tuberculosis Rv2567.

This is an uncharacterized protein from Mycobacterium bovis (strain ATCC BAA-935 / AF2122/97).